Reading from the N-terminus, the 285-residue chain is DNA repair protein RecO (285 aa).

The protein belongs to the RecO family.

In terms of biological role, involved in DNA repair and RecF pathway recombination. The chain is DNA repair protein RecO from Synechococcus sp. (strain JA-2-3B'a(2-13)) (Cyanobacteria bacterium Yellowstone B-Prime).